The primary structure comprises 819 residues: Disintegrin and metalloproteinase domain-containing protein 9 (819 aa).

The N-terminal stretch at 1-28 is a signal peptide; it reads MGSGARFPSGTLRVRWLLLLGLVGPVLG. At 29 to 697 the chain is on the extracellular side; that stretch reads AARPGFQQTS…YNEMNTALRD (669 aa). Residues Asn-125, Asn-144, Asn-154, and Asn-231 are each glycosylated (N-linked (GlcNAc...) asparagine). The Peptidase M12B domain occupies 212–406; that stretch reads RYVELFIVVD…KGGNCLLNIP (195 aa). 7 cysteine pairs are disulfide-bonded: Cys-322/Cys-401, Cys-363/Cys-385, Cys-365/Cys-370, Cys-473/Cys-493, Cys-644/Cys-656, Cys-650/Cys-662, and Cys-664/Cys-673. His-347 serves as a coordination point for Zn(2+). Glu-348 is a catalytic residue. Residues His-351 and His-357 each coordinate Zn(2+). Residues Asn-381 and Asn-487 are each glycosylated (N-linked (GlcNAc...) asparagine). The Disintegrin domain maps to 414-501; the sequence is APSCGNKLVD…FCQPDVFIQN (88 aa). The 55-residue stretch at 644 to 698 folds into the EGF-like domain; it reads CDVQKKCHGHGVCNSNKNCHCENGWAPPNCETKGYGGSVDSGPTYNEMNTALRDG. A helical membrane pass occupies residues 698–718; it reads GLLVFFFLIVPLIVCAIFIFI. Residues 719–819 lie on the Cytoplasmic side of the membrane; it reads KRDQLWRSYF…PAPPLYSSLT (101 aa). Disordered regions lie at residues 734–763 and 780–819; these read QTYE…VTPP and AKQP…SSLT. Residues 735 to 750 show a composition bias toward polar residues; it reads TYESDGKNQANPSRQP. Residue Ser-758 is modified to Phosphoserine. At Thr-761 the chain carries Phosphothreonine.

Interacts with SH3GL2 and SNX9 through its cytoplasmic tail. Interacts with ITGA6. Zn(2+) serves as cofactor. In terms of processing, proteolytically cleaved in the trans-Golgi network before it reaches the plasma membrane to generate a mature protein. The removal of the pro-domain occurs via cleavage at two different sites. Processed most likely by a pro-protein convertase such as furin, at the boundary between the pro-domain and the catalytic domain. An additional upstream cleavage pro-protein convertase site (Arg-56/Glu-57) has an important role in the activation of ADAM9. Post-translationally, phosphorylation is induced in vitro by phorbol-12-myristate-13-acetate (PMA). In terms of tissue distribution, widely expressed. Expressed in chondrocytes. Isoform 2 is highly expressed in liver and heart.

The protein resides in the cell membrane. It is found in the secreted. With respect to regulation, synthesized as an inactive form which is proteolytically cleaved to generate an active enzyme. Processing at the upstream site is particularly important for activation of the proenzyme, whereas processing at the boundary between the pro-domain and the catalytic domain does not appear to be essential. Inhibited by hydroxamic acid-based inhibitors. Metalloprotease that cleaves and releases a number of molecules with important roles in tumorigenesis and angiogenesis, such as TEK, KDR, EPHB4, CD40, VCAM1 and CDH5. May mediate cell-cell, cell-matrix interactions and regulate the motility of cells via interactions with integrins. In terms of biological role, may act as alpha-secretase for amyloid precursor protein (APP). The polypeptide is Disintegrin and metalloproteinase domain-containing protein 9 (ADAM9) (Homo sapiens (Human)).